The following is a 192-amino-acid chain: INO80 complex subunit C (192 aa).

The interval 1–44 (MAAQIPIVATTSTPGIVRNSKKRPASPSHNGSSGGGYGASKKKK) is disordered.

Component of the chromatin remodeling INO80 complex; specifically part of a complex module associated with the helicase ATP-binding and the helicase C-terminal domain of INO80. Component of some MLL1/MLL complex, at least composed of the core components KMT2A/MLL1, ASH2L, HCFC1/HCF1, WDR5 and RBBP5, as well as the facultative components BACC1, CHD8, E2F6, HSP70, INO80C, KANSL1, LAS1L, MAX, MCRS1, MGA, MYST1/MOF, PELP1, PHF20, PRP31, RING2, RUVB1/TIP49A, RUVB2/TIP49B, SENP3, TAF1, TAF4, TAF6, TAF7, TAF9 and TEX10.

The protein resides in the nucleus. In terms of biological role, proposed core component of the chromatin remodeling INO80 complex which is involved in transcriptional regulation, DNA replication and probably DNA repair. This is INO80 complex subunit C (INO80C) from Homo sapiens (Human).